A 462-amino-acid chain; its full sequence is Syringate O-demethylase (462 aa).

This sequence belongs to the GcvT family.

The enzyme catalyses syringate + (6S)-5,6,7,8-tetrahydrofolate = 3-O-methylgallate + (6S)-5-methyl-5,6,7,8-tetrahydrofolate. Its pathway is secondary metabolite metabolism; lignin degradation. Involved in the catabolism of syringate. Catalyzes the conversion of syringate to 3-O-methylgallate (3MGA) in the presence of tetrahydrofolate. Has weak activity with vanillate and 3-O-methylgallate. The polypeptide is Syringate O-demethylase (Sphingobium sp. (strain NBRC 103272 / SYK-6)).